Consider the following 296-residue polypeptide: uncharacterized protein (296 aa).

This is an uncharacterized protein from Magallana gigas (Pacific oyster).